Consider the following 297-residue polypeptide: Homoserine kinase (297 aa).

ATP is bound at residue 82 to 92; it reads PLTRGLGSSAS.

This sequence belongs to the GHMP kinase family. Homoserine kinase subfamily.

It localises to the cytoplasm. It carries out the reaction L-homoserine + ATP = O-phospho-L-homoserine + ADP + H(+). It functions in the pathway amino-acid biosynthesis; L-threonine biosynthesis; L-threonine from L-aspartate: step 4/5. Functionally, catalyzes the ATP-dependent phosphorylation of L-homoserine to L-homoserine phosphate. The protein is Homoserine kinase of Bacillus thuringiensis subsp. konkukian (strain 97-27).